A 354-amino-acid chain; its full sequence is 3-isopropylmalate dehydrogenase (354 aa).

G76–E87 contacts NAD(+). 4 residues coordinate substrate: R94, R104, R130, and D215. Mg(2+) is bound by residues D215, D239, and D243. An NAD(+)-binding site is contributed by G273–N285.

The protein belongs to the isocitrate and isopropylmalate dehydrogenases family. LeuB type 1 subfamily. Homodimer. Requires Mg(2+) as cofactor. The cofactor is Mn(2+).

Its subcellular location is the cytoplasm. It catalyses the reaction (2R,3S)-3-isopropylmalate + NAD(+) = 4-methyl-2-oxopentanoate + CO2 + NADH. The protein operates within amino-acid biosynthesis; L-leucine biosynthesis; L-leucine from 3-methyl-2-oxobutanoate: step 3/4. Its function is as follows. Catalyzes the oxidation of 3-carboxy-2-hydroxy-4-methylpentanoate (3-isopropylmalate) to 3-carboxy-4-methyl-2-oxopentanoate. The product decarboxylates to 4-methyl-2 oxopentanoate. This Bacillus cereus (strain ATCC 14579 / DSM 31 / CCUG 7414 / JCM 2152 / NBRC 15305 / NCIMB 9373 / NCTC 2599 / NRRL B-3711) protein is 3-isopropylmalate dehydrogenase.